Reading from the N-terminus, the 151-residue chain is D-aminoacyl-tRNA deacylase (151 aa).

The Gly-cisPro motif, important for rejection of L-amino acids signature appears at Gly-136 to Pro-137.

This sequence belongs to the DTD family. In terms of assembly, homodimer.

Its subcellular location is the cytoplasm. The enzyme catalyses glycyl-tRNA(Ala) + H2O = tRNA(Ala) + glycine + H(+). The catalysed reaction is a D-aminoacyl-tRNA + H2O = a tRNA + a D-alpha-amino acid + H(+). An aminoacyl-tRNA editing enzyme that deacylates mischarged D-aminoacyl-tRNAs. Also deacylates mischarged glycyl-tRNA(Ala), protecting cells against glycine mischarging by AlaRS. Acts via tRNA-based rather than protein-based catalysis; rejects L-amino acids rather than detecting D-amino acids in the active site. By recycling D-aminoacyl-tRNA to D-amino acids and free tRNA molecules, this enzyme counteracts the toxicity associated with the formation of D-aminoacyl-tRNA entities in vivo and helps enforce protein L-homochirality. The chain is D-aminoacyl-tRNA deacylase from Lactococcus lactis subsp. cremoris (strain SK11).